We begin with the raw amino-acid sequence, 557 residues long: Thermosome subunit 2 (557 aa).

The segment at 527-557 (DLSTGGDDDEEGGAPGGMGGMGGMGGMGGAM) is disordered. Positions 539-557 (GAPGGMGGMGGMGGMGGAM) are enriched in gly residues.

Belongs to the TCP-1 chaperonin family. As to quaternary structure, the thermosome or CCT complex is a oligomeric complex of two octameric double-ring structures; the complex is probably a heterooligomer of CCT1, CCT2 and CCT3 with yet unknown stoichiometry.

Functionally, molecular chaperone that assists in the folding or refolding of nascent or denatured proteins along with ATP hydrolysis. ATPase activity is highest in thermosome assemblies containing CCT1:CCT2, followed by assemblies containing CCT1:CCT2:CCT3. Seems to contribute to thermosome ATPase activity. Not required for growth. This Haloferax volcanii (strain ATCC 29605 / DSM 3757 / JCM 8879 / NBRC 14742 / NCIMB 2012 / VKM B-1768 / DS2) (Halobacterium volcanii) protein is Thermosome subunit 2 (cct2).